The chain runs to 126 residues: B3 domain-containing protein At5g54067 (126 aa).

A DNA-binding region (TF-B3) is located at residues 20 to 118; it reads SDIVGNVVLP…KFVVLNFQYS (99 aa).

The protein localises to the nucleus. This Arabidopsis thaliana (Mouse-ear cress) protein is B3 domain-containing protein At5g54067.